Reading from the N-terminus, the 214-residue chain is MRPDGPRDPVVGPDSGPEPPYPVRLSGPVIKGFGRGSKELGIPTANIPAEELAEHPDLQVGVYYGVVALDPAKFQYHGDASRKGEDSQAAILPAVLSIGYNPFYKNKTRSIEIHIMPPLSSPSPTAEVTTQGQGHGQVKFHKLPDFYGTQLKLLILGYIRPEFDYVSLEALVEDIRVDCEVARASLQRPAYERYLAGGQGLDAVEKQRRWLVSF.

The segment at 1–26 (MRPDGPRDPVVGPDSGPEPPYPVRLS) is disordered. The Mg(2+) site is built by T44 and N46. Catalysis depends on E112, which acts as the Nucleophile.

This sequence belongs to the flavokinase family. Requires Zn(2+) as cofactor. Mg(2+) serves as cofactor.

The enzyme catalyses riboflavin + ATP = FMN + ADP + H(+). The protein operates within cofactor biosynthesis; FMN biosynthesis; FMN from riboflavin (ATP route): step 1/1. In terms of biological role, catalyzes the phosphorylation of riboflavin (vitamin B2) to form flavin mononucleotide (FMN) coenzyme. The chain is Riboflavin kinase (fmn1) from Aspergillus clavatus (strain ATCC 1007 / CBS 513.65 / DSM 816 / NCTC 3887 / NRRL 1 / QM 1276 / 107).